The sequence spans 406 residues: tRNA-specific 2-thiouridylase MnmA (406 aa).

ATP-binding positions include 42–49 (GLSGGVDS) and leucine 68. Cysteine 129 (nucleophile) is an active-site residue. The cysteines at positions 129 and 239 are disulfide-linked. Glycine 154 provides a ligand contact to ATP. An interaction with tRNA region spans residues 189–191 (KDQ). The active-site Cysteine persulfide intermediate is cysteine 239. Residues 344-345 (RY) form an interaction with tRNA region.

The protein belongs to the MnmA/TRMU family.

It is found in the cytoplasm. It catalyses the reaction S-sulfanyl-L-cysteinyl-[protein] + uridine(34) in tRNA + AH2 + ATP = 2-thiouridine(34) in tRNA + L-cysteinyl-[protein] + A + AMP + diphosphate + H(+). In terms of biological role, catalyzes the 2-thiolation of uridine at the wobble position (U34) of tRNA, leading to the formation of s(2)U34. The polypeptide is tRNA-specific 2-thiouridylase MnmA (Prochlorococcus marinus (strain SARG / CCMP1375 / SS120)).